A 52-amino-acid chain; its full sequence is Large ribosomal subunit protein eL39 (52 aa).

Belongs to the eukaryotic ribosomal protein eL39 family.

This is Large ribosomal subunit protein eL39 from Caldivirga maquilingensis (strain ATCC 700844 / DSM 13496 / JCM 10307 / IC-167).